The sequence spans 220 residues: UPF0319 protein YccT (220 aa).

Residues 1–20 (MKTGALTTFLALCLPVTVFA) form the signal peptide.

The protein belongs to the UPF0319 family.

The polypeptide is UPF0319 protein YccT (Salmonella choleraesuis (strain SC-B67)).